Reading from the N-terminus, the 459-residue chain is Flavin-containing monooxygenase FMO GS-OX5 (459 aa).

An FAD-binding site is contributed by 17–22 (GAGAAG). Position 212-217 (212-217 (GNFASG)) interacts with NADP(+).

Belongs to the FMO family.

The catalysed reaction is a (Z)-omega-(methylsulfanyl)-N-sulfo-alkylhydroximate S-glucoside + NADPH + O2 + H(+) = a (Z)-omega-(methylsulfinyl)-alkyl-glucosinolate + NADP(+) + H2O. In terms of biological role, catalyzes the conversion of methylthioalkyl glucosinolates into methylsulfinylalkyl glucosinolates. Specific for 8-methylthiooctyl (8-MTO) glucosinolates. The protein is Flavin-containing monooxygenase FMO GS-OX5 (FMOGS-OX5) of Arabidopsis thaliana (Mouse-ear cress).